We begin with the raw amino-acid sequence, 363 residues long: Peptide chain release factor 1 (363 aa).

Glutamine 237 is modified (N5-methylglutamine). Over residues glutamate 286–threonine 295 the composition is skewed to basic and acidic residues. The interval glutamate 286–arginine 305 is disordered.

The protein belongs to the prokaryotic/mitochondrial release factor family. Methylated by PrmC. Methylation increases the termination efficiency of RF1.

The protein resides in the cytoplasm. In terms of biological role, peptide chain release factor 1 directs the termination of translation in response to the peptide chain termination codons UAG and UAA. In Shewanella amazonensis (strain ATCC BAA-1098 / SB2B), this protein is Peptide chain release factor 1.